The sequence spans 382 residues: Type II secretion system protein L (382 aa).

The Cytoplasmic segment spans residues 1–233; that stretch reads MSGVSALFLP…QQSSQWRRWR (233 aa). The chain crosses the membrane as a helical span at residues 234–254; that stretch reads PLLGLVGLWLVLQWGFTLVQA. Residues 255 to 382 are Periplasmic-facing; the sequence is WQLQREGDRY…TVSARLVIGG (128 aa).

Belongs to the GSP L family. Type II secretion system is composed of four main components: the outer membrane complex, the inner membrane complex, the cytoplasmic secretion ATPase and the periplasm-spanning pseudopilus. Forms homodimers. Interacts with XcpZ/GspM. Interacts with XcpR/GspE and XcpS/GspF.

The protein localises to the cell inner membrane. Its function is as follows. Inner membrane component of the type II secretion system required for the energy-dependent secretion of extracellular factors such as proteases and toxins from the periplasm. Plays a role in the complex assembly and recruits XcpZ resulting in a stable complex in the inner membrane. Provides thus a link between the energy-providing XcpR protein in the cytoplasm and the rest of the T2SS machinery. The chain is Type II secretion system protein L (xcpY) from Pseudomonas aeruginosa (strain ATCC 15692 / DSM 22644 / CIP 104116 / JCM 14847 / LMG 12228 / 1C / PRS 101 / PAO1).